The following is a 370-amino-acid chain: Aminomethyltransferase (370 aa).

Belongs to the GcvT family. In terms of assembly, the glycine cleavage system is composed of four proteins: P, T, L and H.

It carries out the reaction N(6)-[(R)-S(8)-aminomethyldihydrolipoyl]-L-lysyl-[protein] + (6S)-5,6,7,8-tetrahydrofolate = N(6)-[(R)-dihydrolipoyl]-L-lysyl-[protein] + (6R)-5,10-methylene-5,6,7,8-tetrahydrofolate + NH4(+). In terms of biological role, the glycine cleavage system catalyzes the degradation of glycine. The sequence is that of Aminomethyltransferase from Prochlorococcus marinus (strain MIT 9515).